A 209-amino-acid chain; its full sequence is Ribosomal RNA large subunit methyltransferase E (209 aa).

The S-adenosyl-L-methionine site is built by G63, W65, D83, D99, and D124. The Proton acceptor role is filled by K164.

This sequence belongs to the class I-like SAM-binding methyltransferase superfamily. RNA methyltransferase RlmE family.

Its subcellular location is the cytoplasm. It catalyses the reaction uridine(2552) in 23S rRNA + S-adenosyl-L-methionine = 2'-O-methyluridine(2552) in 23S rRNA + S-adenosyl-L-homocysteine + H(+). Its function is as follows. Specifically methylates the uridine in position 2552 of 23S rRNA at the 2'-O position of the ribose in the fully assembled 50S ribosomal subunit. This is Ribosomal RNA large subunit methyltransferase E from Aeromonas salmonicida (strain A449).